Consider the following 349-residue polypeptide: Neutral protease 2 homolog ACLA_052720 (349 aa).

The N-terminal stretch at 1-19 (MQLTVLASAILALAQGALA) is a signal peptide. A propeptide spanning residues 20-172 (IPAKAPALDV…PAAINLLDRR (153 aa)) is cleaved from the precursor. Intrachain disulfides connect C178-C250 and C257-C275. H300 is a Zn(2+) binding site. Residue E301 is part of the active site. The Zn(2+) site is built by H304 and D315.

This sequence belongs to the peptidase M35 family. It depends on Zn(2+) as a cofactor.

The protein resides in the secreted. It carries out the reaction Preferential cleavage of bonds with hydrophobic residues in P1'. Also 3-Asn-|-Gln-4 and 8-Gly-|-Ser-9 bonds in insulin B chain.. In terms of biological role, secreted metalloproteinase that allows assimilation of proteinaceous substrates. Shows high activities on basic nuclear substrates such as histone and protamine. The polypeptide is Neutral protease 2 homolog ACLA_052720 (Aspergillus clavatus (strain ATCC 1007 / CBS 513.65 / DSM 816 / NCTC 3887 / NRRL 1 / QM 1276 / 107)).